Reading from the N-terminus, the 601-residue chain is Glutamyl-tRNA(Gln) amidotransferase subunit B, mitochondrial (601 aa).

A mitochondrion-targeting transit peptide spans 1–55 (MLRPWLRQCPRATRSLACPQCHLPRPQTARRALRPLPALSLSHPIRSLQTTTTES).

Belongs to the GatB/GatE family. GatB subfamily. As to quaternary structure, subunit of the heterotrimeric GatCAB amidotransferase (AdT) complex, composed of A, B and C subunits.

It localises to the mitochondrion. The catalysed reaction is L-glutamyl-tRNA(Gln) + L-glutamine + ATP + H2O = L-glutaminyl-tRNA(Gln) + L-glutamate + ADP + phosphate + H(+). Its function is as follows. Allows the formation of correctly charged Gln-tRNA(Gln) through the transamidation of misacylated Glu-tRNA(Gln) in the mitochondria. The reaction takes place in the presence of glutamine and ATP through an activated gamma-phospho-Glu-tRNA(Gln). The protein is Glutamyl-tRNA(Gln) amidotransferase subunit B, mitochondrial of Aspergillus niger (strain ATCC MYA-4892 / CBS 513.88 / FGSC A1513).